The primary structure comprises 205 residues: Ribonuclease HII (205 aa).

The 190-residue stretch at 16-205 (VSEVGIDEVG…KSFLKKSKLI (190 aa)) folds into the RNase H type-2 domain. D22, E23, and D118 together coordinate a divalent metal cation.

The protein belongs to the RNase HII family. Mn(2+) is required as a cofactor. The cofactor is Mg(2+).

The protein localises to the cytoplasm. It carries out the reaction Endonucleolytic cleavage to 5'-phosphomonoester.. In terms of biological role, endonuclease that specifically degrades the RNA of RNA-DNA hybrids. This is Ribonuclease HII from Prochlorococcus marinus (strain AS9601).